The following is a 174-amino-acid chain: Translation initiation factor IF-3 (174 aa).

This sequence belongs to the IF-3 family. In terms of assembly, monomer.

The protein resides in the cytoplasm. In terms of biological role, IF-3 binds to the 30S ribosomal subunit and shifts the equilibrium between 70S ribosomes and their 50S and 30S subunits in favor of the free subunits, thus enhancing the availability of 30S subunits on which protein synthesis initiation begins. The chain is Translation initiation factor IF-3 from Xanthobacter autotrophicus (strain ATCC BAA-1158 / Py2).